Reading from the N-terminus, the 272-residue chain is Phosphoglycolate phosphatase 1 (272 aa).

Asp19 (nucleophile) is an active-site residue. Asp19, Asp21, and Asp182 together coordinate Mg(2+).

The protein belongs to the HAD-like hydrolase superfamily. CbbY/CbbZ/Gph/YieH family. Mg(2+) is required as a cofactor.

It carries out the reaction 2-phosphoglycolate + H2O = glycolate + phosphate. It participates in organic acid metabolism; glycolate biosynthesis; glycolate from 2-phosphoglycolate: step 1/1. In terms of biological role, specifically catalyzes the dephosphorylation of 2-phosphoglycolate. Is involved in the dissimilation of the intracellular 2-phosphoglycolate formed during the DNA repair of 3'-phosphoglycolate ends, a major class of DNA lesions induced by oxidative stress. The sequence is that of Phosphoglycolate phosphatase 1 from Pseudomonas aeruginosa (strain ATCC 15692 / DSM 22644 / CIP 104116 / JCM 14847 / LMG 12228 / 1C / PRS 101 / PAO1).